The sequence spans 593 residues: UvrABC system protein C (593 aa).

Residues 17 to 94 (MEPGCYLMKD…IKQYQPRYNI (78 aa)) form the GIY-YIG domain. In terms of domain architecture, UVR spans 199-234 (KTILKSLEERMLTASESLDFERAKEYRDLIQHIQNL).

The protein belongs to the UvrC family. Interacts with UvrB in an incision complex.

The protein localises to the cytoplasm. Functionally, the UvrABC repair system catalyzes the recognition and processing of DNA lesions. UvrC both incises the 5' and 3' sides of the lesion. The N-terminal half is responsible for the 3' incision and the C-terminal half is responsible for the 5' incision. This is UvrABC system protein C from Staphylococcus aureus (strain USA300).